Here is a 22-residue protein sequence, read N- to C-terminus: RHGCCKGPKGCSSRECRPQHCC.

Cystine bridges form between Cys4–Cys16, Cys5–Cys21, and Cys11–Cys22. 4-hydroxyproline is present on residues Pro8 and Pro18. Cys22 carries the post-translational modification Cysteine amide.

The protein belongs to the conotoxin M superfamily. In terms of tissue distribution, expressed by the venom duct.

The protein localises to the secreted. In terms of biological role, mu-conotoxins block voltage-gated sodium channels (Nav). This synthetic toxin reversibly and potently blocks rNav1.4/SCN4A (IC(50) is 9 nM) and rNav1.2/SCN2A (IC(50) is 40 nM). It also moderately blocks rNav1.1/SCN1A, rNav1.3/SCN3A, and rNav1.6/SCN8A. The block of SCN1A and SCN2A is modified when beta-subunits are coexpressed with alpha subunits. Hence, blocks of channels containing beta-1 and beta-3 subunits are more potent (compared to channels without beta subunits), whereas blocks of channels containing beta-2 and beta-4 subunits are less potent (compared to channels without beta subunits). The chain is Mu-conotoxin TIIIA from Conus tulipa (Fish-hunting cone snail).